Consider the following 385-residue polypeptide: Multidrug export protein AcrE (385 aa).

The signal sequence occupies residues 1–23 (MTKHARFFLLPSFILISAALIAG). Cys24 carries N-palmitoyl cysteine lipidation. The S-diacylglycerol cysteine moiety is linked to residue Cys24. The tract at residues 366 to 385 (ARPGEQVKATTDTPADTASK) is disordered. A compositionally biased stretch (polar residues) spans 373–385 (KATTDTPADTASK).

This sequence belongs to the membrane fusion protein (MFP) (TC 8.A.1) family. As to quaternary structure, part of the tripartite efflux system AcrEF-TolC, which is composed of an inner membrane transporter, AcrF, a periplasmic membrane fusion protein, AcrE, and an outer membrane component, TolC. The complex forms a large protein conduit and can translocate molecules across both the inner and outer membranes.

It localises to the cell inner membrane. Its function is as follows. Part of the tripartite efflux system AcrEF-TolC. Involved in the efflux of indole and organic solvents. This chain is Multidrug export protein AcrE (acrE), found in Escherichia coli (strain K12).